Consider the following 1432-residue polypeptide: ABC transporter asL7 (1432 aa).

Polar residues predominate over residues 1–20 (MFDTTKLQSSTQDGSTSSVT). Positions 1-36 (MFDTTKLQSSTQDGSTSSVTGEPIFGANDPNSELNP) are disordered. In terms of domain architecture, ABC transporter 1 spans 91 to 341 (LALPGMLIRN…FERLGFECPS (251 aa)). N-linked (GlcNAc...) asparagine glycosylation is present at Asn-265. 6 consecutive transmembrane segments (helical) span residues 450 to 470 (PTIV…SLFF), 484 to 504 (VVLF…VMTL), 530 to 550 (VLMD…VFYF), 559 to 579 (GNFF…SGIF), 597 to 617 (MIPA…MVPI), and 702 to 722 (IGIV…TSEY). The 244-residue stretch at 786–1029 (FHWRNVCYDI…TLVEYFERKA (244 aa)) folds into the ABC transporter 2 domain. Residue 822-829 (GVSGAGKT) participates in ATP binding. Residue Asn-1017 is glycosylated (N-linked (GlcNAc...) asparagine). The segment at 1076–1095 (LSRLREHGSQSNSHDSEKSE) is disordered. 6 helical membrane-spanning segments follow: residues 1135–1155 (FALC…SPLS), 1166–1186 (VFQL…QFII), 1215–1235 (IPYY…PIGL), 1251–1271 (LMWL…HFCI), 1279–1299 (AGAN…GALI), and 1317–1337 (LSYL…VTCA). Asn-1371 carries N-linked (GlcNAc...) asparagine glycosylation. Residues 1402–1422 (FGIIWVYVIFNISAAITLYWV) traverse the membrane as a helical segment.

The protein belongs to the ABC transporter superfamily. ABCG family. PDR (TC 3.A.1.205) subfamily.

It localises to the cell membrane. In terms of biological role, ABC transporter; part of the gene cluster that mediates the biosynthesis of xenovulene A, an unusual meroterpenoid that has potent inhibitory effects on the human gamma-aminobutyrate A (GABAA) benzodiazepine receptor. This Sarocladium schorii (Acremonium strictum (strain IMI 501407)) protein is ABC transporter asL7.